The following is a 1361-amino-acid chain: DNA-directed RNA polymerase subunit beta (1361 aa).

It belongs to the RNA polymerase beta chain family. The RNAP catalytic core consists of 2 alpha, 1 beta, 1 beta' and 1 omega subunit. When a sigma factor is associated with the core the holoenzyme is formed, which can initiate transcription.

The enzyme catalyses RNA(n) + a ribonucleoside 5'-triphosphate = RNA(n+1) + diphosphate. Functionally, DNA-dependent RNA polymerase catalyzes the transcription of DNA into RNA using the four ribonucleoside triphosphates as substrates. This Cellvibrio japonicus (strain Ueda107) (Pseudomonas fluorescens subsp. cellulosa) protein is DNA-directed RNA polymerase subunit beta.